The chain runs to 151 residues: Methylglyoxal synthase (151 aa).

An MGS-like domain is found at 1–151 (MKKTTRTMAA…DYQAYLAERT (151 aa)). Substrate contacts are provided by residues H19, K23, 45–48 (TGTT), and 65–66 (SG). Residue D71 is the Proton donor/acceptor of the active site. H98 is a substrate binding site.

The protein belongs to the methylglyoxal synthase family.

The enzyme catalyses dihydroxyacetone phosphate = methylglyoxal + phosphate. Functionally, catalyzes the formation of methylglyoxal from dihydroxyacetone phosphate. In Vibrio cholerae serotype O1 (strain ATCC 39541 / Classical Ogawa 395 / O395), this protein is Methylglyoxal synthase.